We begin with the raw amino-acid sequence, 404 residues long: ATP phosphoribosyltransferase regulatory subunit (404 aa).

This sequence belongs to the class-II aminoacyl-tRNA synthetase family. HisZ subfamily. As to quaternary structure, heteromultimer composed of HisG and HisZ subunits.

It localises to the cytoplasm. The protein operates within amino-acid biosynthesis; L-histidine biosynthesis; L-histidine from 5-phospho-alpha-D-ribose 1-diphosphate: step 1/9. Required for the first step of histidine biosynthesis. May allow the feedback regulation of ATP phosphoribosyltransferase activity by histidine. In Trichormus variabilis (strain ATCC 29413 / PCC 7937) (Anabaena variabilis), this protein is ATP phosphoribosyltransferase regulatory subunit.